The following is a 532-amino-acid chain: Membrane protein insertase YidC (532 aa).

5 consecutive transmembrane segments (helical) span residues 7-27 (FFIF…QSQM), 336-356 (LTIL…ITFI), 413-433 (GGFL…YMLI), 450-470 (LSSQ…MFFI), and 492-512 (PVIF…YYII).

This sequence belongs to the OXA1/ALB3/YidC family. Type 1 subfamily. Interacts with the Sec translocase complex via SecD. Specifically interacts with transmembrane segments of nascent integral membrane proteins during membrane integration.

The protein resides in the cell membrane. Its function is as follows. Required for the insertion and/or proper folding and/or complex formation of integral membrane proteins into the membrane. Involved in integration of membrane proteins that insert both dependently and independently of the Sec translocase complex, as well as at least some lipoproteins. Aids folding of multispanning membrane proteins. The protein is Membrane protein insertase YidC of Buchnera aphidicola subsp. Acyrthosiphon pisum (strain Tuc7).